Consider the following 109-residue polypeptide: Nucleoid-associated protein BU482 (109 aa).

This sequence belongs to the YbaB/EbfC family. Homodimer.

The protein resides in the cytoplasm. The protein localises to the nucleoid. Its function is as follows. Binds to DNA and alters its conformation. May be involved in regulation of gene expression, nucleoid organization and DNA protection. The protein is Nucleoid-associated protein BU482 of Buchnera aphidicola subsp. Acyrthosiphon pisum (strain APS) (Acyrthosiphon pisum symbiotic bacterium).